Reading from the N-terminus, the 49-residue chain is Large ribosomal subunit protein bL33 (49 aa).

Belongs to the bacterial ribosomal protein bL33 family.

This is Large ribosomal subunit protein bL33 from Heliobacterium modesticaldum (strain ATCC 51547 / Ice1).